The following is a 224-amino-acid chain: Orotidine 5'-phosphate decarboxylase (224 aa).

Substrate contacts are provided by residues aspartate 10, lysine 32, 59-68, threonine 115, arginine 175, glutamine 184, glycine 204, and arginine 205; that span reads DLKLHDIPNT. Catalysis depends on lysine 61, which acts as the Proton donor.

The protein belongs to the OMP decarboxylase family. Type 1 subfamily. In terms of assembly, homodimer.

It carries out the reaction orotidine 5'-phosphate + H(+) = UMP + CO2. It functions in the pathway pyrimidine metabolism; UMP biosynthesis via de novo pathway; UMP from orotate: step 2/2. Its function is as follows. Catalyzes the decarboxylation of orotidine 5'-monophosphate (OMP) to uridine 5'-monophosphate (UMP). The protein is Orotidine 5'-phosphate decarboxylase of Sphingopyxis alaskensis (strain DSM 13593 / LMG 18877 / RB2256) (Sphingomonas alaskensis).